Here is a 372-residue protein sequence, read N- to C-terminus: Aryl-hydrocarbon-interacting protein-like 1 (372 aa).

Residues Arg-53–Gln-145 enclose the PPIase FKBP-type domain. TPR repeat units follow at residues Val-178–Leu-211, Asn-230–Ile-263, and Val-264–Met-297. A disordered region spans residues Lys-315–His-372. The span at Pro-335 to Ala-345 shows a compositional bias: pro residues.

Interacts with NUB1.

The protein localises to the cytoplasm. It localises to the nucleus. Functionally, may be important in protein trafficking and/or protein folding and stabilization. The chain is Aryl-hydrocarbon-interacting protein-like 1 (AIPL1) from Papio cynocephalus (Yellow baboon).